The sequence spans 378 residues: UPF0754 membrane protein BCAH820_0954 (378 aa).

Transmembrane regions (helical) follow at residues 1–21 and 357–377; these read MNIW…GGFT and YLGA…LLFL.

Belongs to the UPF0754 family.

It localises to the cell membrane. The protein is UPF0754 membrane protein BCAH820_0954 of Bacillus cereus (strain AH820).